The sequence spans 257 residues: Gamma-secretase subunit APH-1B (257 aa).

7 helical membrane-spanning segments follow: residues 5-25 (VFFG…VFTI), 32-52 (IIFL…SSLV), 70-90 (YLLI…RFAY), 115-135 (LLAY…SFVN), 158-178 (YSAF…IVFF), 186-206 (WGIL…TFIS), and 213-233 (LASA…AAGG).

This sequence belongs to the APH-1 family. As to quaternary structure, probable component of the gamma-secretase complex, a complex composed of a presenilin homodimer (PSEN1 or PSEN2), nicastrin (NCSTN), APH1 (APH1A or APH1B) and PEN2. Such minimal complex is sufficient for secretase activity, although other components may exist. Interacts with PSEN1 and PSEN2.

The protein resides in the membrane. In terms of biological role, probable subunit of the gamma-secretase complex, an endoprotease complex that catalyzes the intramembrane cleavage of integral proteins such as Notch receptors and APP (amyloid-beta precursor protein). It probably represents a stabilizing cofactor for the presenilin homodimer that promotes the formation of a stable complex. Probably present in a minority of gamma-secretase complexes compared to APH1A. This is Gamma-secretase subunit APH-1B (APH1B) from Pongo abelii (Sumatran orangutan).